The chain runs to 98 residues: MNAERLMQVILAPIVTEKATFVAEKNQQVAFRVVADATKPEIKAAVELLFKVQVESVQVLNRKGKVKRFGRFVGRRRNERKAYVALKDGQEIDFAEVK.

This sequence belongs to the universal ribosomal protein uL23 family. In terms of assembly, part of the 50S ribosomal subunit. Contacts protein L29, and trigger factor when it is bound to the ribosome.

One of the early assembly proteins it binds 23S rRNA. One of the proteins that surrounds the polypeptide exit tunnel on the outside of the ribosome. Forms the main docking site for trigger factor binding to the ribosome. This is Large ribosomal subunit protein uL23 from Bordetella bronchiseptica (strain ATCC BAA-588 / NCTC 13252 / RB50) (Alcaligenes bronchisepticus).